The primary structure comprises 202 residues: Histone chaperone ASF1B (202 aa).

An interaction with histone H3 and CHAF1B region spans residues 1–156 (MAKVSVLNVA…TRFHINWDNN (156 aa)). Phosphoserine; by TLK2 is present on Ser198.

It belongs to the ASF1 family. Interacts with histone H3 (via C-terminus), including histone H3.1, H3.2 and H3.3, and histone H4; the interaction with H3 is direct. Interacts with the CHAF1A, CHAF1B and RBBP4 subunits of the CAF-1 complex. Interacts with HAT1, NASP and TAF1. Found in a soluble complex with NASP and histones H3 and H4; the interaction with NASP is probably indirect and mediated by H3-H4. Interacts with CDAN1. Found in a cytosolic complex with CDAN1, ASF1A, IPO4 and histones H3.1 and H4. Interacts with CREBBP. Phosphorylated by TLK2. Phosphorylated by TLK1. In terms of tissue distribution, highly expressed in germ cells. Restricted to premeiotic to meiotic stages during spermatogenesis.

The protein resides in the nucleus. The protein localises to the cytoplasm. It localises to the cytosol. Its function is as follows. Histone chaperone that facilitates histone deposition and histone exchange and removal during nucleosome assembly and disassembly. Cooperates with chromatin assembly factor 1 (CAF-1) to promote replication-dependent chromatin assembly. Also involved in the nuclear import of the histone H3-H4 dimer together with importin-4 (IPO4): specifically recognizes and binds newly synthesized histones with the monomethylation of H3 'Lys-9' (H3K9me1) and diacetylation at 'Lys-5' and 'Lys-12' of H4 (H4K5ac and H4K12ac) marks in the cytosol. Does not participate in replication-independent nucleosome deposition which is mediated by ASF1A and HIRA. Required for gonad development. The chain is Histone chaperone ASF1B from Mus musculus (Mouse).